A 256-amino-acid polypeptide reads, in one-letter code: MAVGKNKRLSKGKKGVKKRTVDPFSRKDEYSVKAPSTFQIRDVGKTLVNRTSGLKNANDSLKGRIFEVSLADLQNDEDHAFRKVKLRVDEVQGKNCLTNFHGLDFTTDKLRSLVRKWQSLIEANVTVKTTDDYLLRLFAIAFTKRRPNQIKKTTYARSSQIRAIRKKMIEIMQREAASCSLAQLTHKLIPEVIGREIEKATQGIYPLQNVHIRKVKLLKAPKFDLGALLNLHGESTTDDKGHKVEREFKEQVLESV.

The span at 1-18 shows a compositional bias: basic residues; the sequence is MAVGKNKRLSKGKKGVKK. The segment at 1–21 is disordered; the sequence is MAVGKNKRLSKGKKGVKKRTV. Residue Ala-2 is modified to N-acetylalanine; partial.

This sequence belongs to the eukaryotic ribosomal protein eS1 family. Component of the small ribosomal subunit. Mature ribosomes consist of a small (40S) and a large (60S) subunit. The 40S subunit contains about 33 different proteins and 1 molecule of RNA (18S). The 60S subunit contains about 49 different proteins and 3 molecules of RNA (25S, 5.8S and 5S).

The protein resides in the cytoplasm. In Neosartorya fischeri (strain ATCC 1020 / DSM 3700 / CBS 544.65 / FGSC A1164 / JCM 1740 / NRRL 181 / WB 181) (Aspergillus fischerianus), this protein is Small ribosomal subunit protein eS1 (rps1).